The primary structure comprises 396 residues: Inositol hexakisphosphate kinase 3 (396 aa).

Position 206-214 (206-214 (PCILDLKMG)) interacts with substrate.

Belongs to the inositol phosphokinase (IPK) family. Highly expressed in cerebellum, brain cortex, kidney, thymus and lung. Detected at lower levels in hippocampus, testis, heart and olfactory bulb.

It localises to the cytoplasm. It carries out the reaction 1D-myo-inositol hexakisphosphate + ATP = 5-diphospho-1D-myo-inositol 1,2,3,4,6-pentakisphosphate + ADP. The catalysed reaction is 1-diphospho-1D-myo-inositol 2,3,4,5,6-pentakisphosphate + ATP + H(+) = 1,5-bis(diphospho)-1D-myo-inositol 2,3,4,6-tetrakisphosphate + ADP. Converts inositol hexakisphosphate (InsP6) to diphosphoinositol pentakisphosphate (InsP7/PP-InsP5). Converts 1,3,4,5,6-pentakisphosphate (InsP5) to PP-InsP4. The sequence is that of Inositol hexakisphosphate kinase 3 (Ip6k3) from Mus musculus (Mouse).